The primary structure comprises 367 residues: Probable glutamine synthetase (367 aa).

In terms of domain architecture, GS beta-grasp spans 30–110; that stretch reads IQATYVWIDG…VMCDTLDHQM (81 aa). One can recognise a GS catalytic domain in the interval 117-367; it reads HRQACAEIMH…TAMIAQSILF (251 aa).

Belongs to the glutamine synthetase family. As to quaternary structure, homooctamer.

It is found in the cytoplasm. It catalyses the reaction L-glutamate + NH4(+) + ATP = L-glutamine + ADP + phosphate + H(+). This is Probable glutamine synthetase (gln-2) from Caenorhabditis elegans.